A 38-amino-acid chain; its full sequence is Histatin-1 (38 aa).

The interval 1-38 is disordered; it reads DSHEERHHGRHGHHKYGRKFHEKHHSHRGYRSNYLYDN. Position 2 is a phosphoserine (Ser-2). Residues 8–30 show a composition bias toward basic residues; it reads HGRHGHHKYGRKFHEKHHSHRGY.

It belongs to the histatin/statherin family.

Its subcellular location is the secreted. Functionally, histatins (Hsts) are cationic and histidine-rich secreted peptides mainly synthesized by saliva glands of humans and higher primates. Hsts are considered to be major precursors of the protective proteinaceous structure on tooth surfaces (enamel pellicle). The polypeptide is Histatin-1 (HTN1) (Macaca fascicularis (Crab-eating macaque)).